Reading from the N-terminus, the 582-residue chain is GPI-anchor transamidase component PIGT (582 aa).

A signal peptide spans 1 to 25 (MAAAMPLGLPLRLLVLLLVGRGCCG). At 26–529 (CAEGPRDSLR…NLPTPDFSMP (504 aa)) the chain is on the lumenal side. N-linked (GlcNAc...) asparagine glycosylation occurs at asparagine 168. Intrachain disulfides connect cysteine 199-cysteine 276 and cysteine 230-cysteine 235. N-linked (GlcNAc...) asparagine glycosylation is found at asparagine 295 and asparagine 331. Positions 465, 525, 527, and 531 each coordinate a 2-acyl-6-[6-phosphoethanolamine-alpha-D-mannosyl-(1-&gt;2)-6-phosphoethanolamine-alpha-D-mannosyl-(1-&gt;6)-2-phosphoethanolamine-alpha-D-mannosyl-(1-&gt;4)-alpha-D-glucosaminyl]-1-(1-radyl,2-acyl-sn-glycero-3-phospho)-1D-myo-inositol. Residues 530-552 (YNVICLTCTVVAVCYGSFYNLLT) form a helical membrane-spanning segment. Topologically, residues 553–582 (RTFHIEEPKSGGLAKRLANLIRRARGVPPL) are cytoplasmic.

This sequence belongs to the PIGT family. In terms of assembly, heteropentamer. Part of the GPI-anchor transamidase complex, consisting of PIGK, PIGT, PIGS, PIGU and GAA1. In terms of processing, the disulfide bond between PIGK/GPI8 and PIGT is important for normal enzyme activity.

The protein resides in the endoplasmic reticulum membrane. It participates in glycolipid biosynthesis; glycosylphosphatidylinositol-anchor biosynthesis. In terms of biological role, component of the glycosylphosphatidylinositol-anchor (GPI-anchor) transamidase (GPI-T) complex that catalyzes the formation of the linkage between a proprotein and a GPI-anchor and participates in GPI anchored protein biosynthesis. May play a crucial role in GPI-T complex assembly in the luminal layer. Binds GPI-anchor. This is GPI-anchor transamidase component PIGT from Mus musculus (Mouse).